We begin with the raw amino-acid sequence, 129 residues long: Small ribosomal subunit protein uS11 (129 aa).

The protein belongs to the universal ribosomal protein uS11 family. Part of the 30S ribosomal subunit. Interacts with proteins S7 and S18. Binds to IF-3.

Located on the platform of the 30S subunit, it bridges several disparate RNA helices of the 16S rRNA. Forms part of the Shine-Dalgarno cleft in the 70S ribosome. In Azorhizobium caulinodans (strain ATCC 43989 / DSM 5975 / JCM 20966 / LMG 6465 / NBRC 14845 / NCIMB 13405 / ORS 571), this protein is Small ribosomal subunit protein uS11.